Reading from the N-terminus, the 123-residue chain is UPF0295 protein Bcer98_0460 (123 aa).

The next 2 helical transmembrane spans lie at 12 to 32 (IRTF…LGVF) and 43 to 63 (FMML…WIGM).

The protein belongs to the UPF0295 family.

It is found in the cell membrane. This is UPF0295 protein Bcer98_0460 from Bacillus cytotoxicus (strain DSM 22905 / CIP 110041 / 391-98 / NVH 391-98).